The primary structure comprises 720 residues: MFTPEREKELQEKTRELLRKIKDVKVLSFEEAKKLAEDLREVIRYHDYKYYVEANPVIPDYDYDRLFRALKEIEKKYPELITPDSPTQRVASEISGEFPTVKHYTPMLSLDNAYSEDELREFDRRVRQITGLEVVEYAVEPKLDGAGIALVYENDLFVRGATRGDGEYGEDITNNLKTIKTIPLKAEFSRFGIKLAEIRGEVVIRKDEFQKLNKERMEEGLPPFANPRNAAAGSIRQKDPKEVAKRNLEAIVYHLSYVEPPETEPPTHYESLKMLHTLGFKTLFKDTKVCKGIDEVIEYCKEWEKKRDSYPYEIDGMVVKVNDRRLWKVLGYTSHHPRWAIAYKFKPRRAVTKLVDVVFQVGRTGTITPVGKLEPVELGGVTVSSVSLFNEDFIREKDIRIGDWVVVERAGDVIPYVVEVLKEKRTGEEKPVEFPKYCPSCGSELVKLPEEVAIRCINISCPAQSVLRIKHWASRDAMDIRGLGDATIKLLFNRGLAKDVGDLYYLKLTDILKLPGFGEKSAMNLLKAIEESKNRPLDRVLYGLGIRYVGQTTAKKIAEIINSVWDLKDIPLEKLMRLEGIGYKVARSIKEFFNIPQNLEVLKKLEKAGVNLAKKVKEKVADVLKGKTFVFTGTLDCCSREKAGEIVEMLGGKFSNSVTSKTDYLVVGKDPGATKLSKAKKYGVKTITEEEFVNMIKDYVDLEKIKKEDKKEKPKIGRLF.

Residues 60 to 64, 109 to 110, and glutamate 140 each bind NAD(+); these read DYDYD and SL. Lysine 142 functions as the N6-AMP-lysine intermediate in the catalytic mechanism. 2 residues coordinate NAD(+): arginine 163 and glutamate 201. A disordered region spans residues 220-239; it reads GLPPFANPRNAAAGSIRQKD. NAD(+)-binding residues include lysine 320 and lysine 344. 4 residues coordinate Zn(2+): cysteine 438, cysteine 441, cysteine 456, and cysteine 461. The BRCT domain occupies 619–709; the sequence is KVADVLKGKT…VDLEKIKKED (91 aa).

Belongs to the NAD-dependent DNA ligase family. LigA subfamily. It depends on Mn(2+) as a cofactor. Mg(2+) is required as a cofactor.

It catalyses the reaction NAD(+) + (deoxyribonucleotide)n-3'-hydroxyl + 5'-phospho-(deoxyribonucleotide)m = (deoxyribonucleotide)n+m + AMP + beta-nicotinamide D-nucleotide.. Functionally, DNA ligase that catalyzes the formation of phosphodiester linkages between 5'-phosphoryl and 3'-hydroxyl groups in double-stranded DNA using NAD as a coenzyme and as the energy source for the reaction. It is essential for DNA replication and repair of damaged DNA. In Aquifex aeolicus (strain VF5), this protein is DNA ligase.